The following is a 212-amino-acid chain: Outer-membrane lipoprotein carrier protein (212 aa).

Positions 1–25 (MRKRILVSACAALAVFAAHMPTALA) are cleaved as a signal peptide.

This sequence belongs to the LolA family. Monomer.

The protein localises to the periplasm. Functionally, participates in the translocation of lipoproteins from the inner membrane to the outer membrane. Only forms a complex with a lipoprotein if the residue after the N-terminal Cys is not an aspartate (The Asp acts as a targeting signal to indicate that the lipoprotein should stay in the inner membrane). The protein is Outer-membrane lipoprotein carrier protein of Cupriavidus pinatubonensis (strain JMP 134 / LMG 1197) (Cupriavidus necator (strain JMP 134)).